The primary structure comprises 141 residues: uncharacterized protein (141 aa).

Residues 13 to 141 (VTKGTELEKE…LKGILDRYFK (129 aa)) form the Ferritin-like diiron domain. Residues Glu-63, His-66, Glu-125, and His-128 each coordinate Fe cation.

This is an uncharacterized protein from Methanocaldococcus jannaschii (strain ATCC 43067 / DSM 2661 / JAL-1 / JCM 10045 / NBRC 100440) (Methanococcus jannaschii).